The primary structure comprises 127 residues: Probable 4-amino-4-deoxy-L-arabinose-phosphoundecaprenol flippase subunit ArnF (127 aa).

Residues 1–21 (MMGYFWALMSVLLVSGAQLMM) form a helical membrane-spanning segment. Topologically, residues 22-48 (KWAMVSLPPVGQTDALMSAFMSVTPGA) are periplasmic. A helical transmembrane segment spans residues 49–69 (VALVIGLFAYVFSMGCWYMAL). Residues 70-77 (RRIALSKA) lie on the Cytoplasmic side of the membrane. The helical transmembrane segment at 78–98 (YPLLSLSYVLVWAAAIGLPWL) threads the bilayer. The Periplasmic portion of the chain corresponds to 99–101 (HEP). The helical transmembrane segment at 102–122 (FSVGKLAGVSVIFVGLLLVCL) threads the bilayer. Residues 123–127 (PDKKS) lie on the Cytoplasmic side of the membrane.

Belongs to the ArnF family. Heterodimer of ArnE and ArnF.

Its subcellular location is the cell inner membrane. The protein operates within bacterial outer membrane biogenesis; lipopolysaccharide biosynthesis. Functionally, translocates 4-amino-4-deoxy-L-arabinose-phosphoundecaprenol (alpha-L-Ara4N-phosphoundecaprenol) from the cytoplasmic to the periplasmic side of the inner membrane. The sequence is that of Probable 4-amino-4-deoxy-L-arabinose-phosphoundecaprenol flippase subunit ArnF from Enterobacter sp. (strain 638).